A 187-amino-acid polypeptide reads, in one-letter code: Methylamine dehydrogenase light chain (187 aa).

A signal peptide (tat-type signal) is located at residues 1–57 (MKKDTGFDSKIEKLARTTASKTGRRGFIGRLGGFLVGSALLPLLPVDRRSRLGGEVQ). 6 cysteine pairs are disulfide-bonded: C79/C144, C85/C117, C92/C177, C94/C142, C102/C133, and C134/C165. The residue at position 113 (W113) is a Tryptophylquinone. Residues 113–164 (WVASCYNPGDQQTYLIAYRDCCGKQTCGRCNCVNTQGELPVYRPEFNNDIVW) constitute a cross-link (tryptophan tryptophylquinone (Trp-Trp)).

The protein belongs to the aromatic amine dehydrogenase light chain family. In terms of assembly, heterotetramer of two light and two heavy chains. Tryptophan tryptophylquinone residue serves as cofactor. Predicted to be exported by the Tat system. The position of the signal peptide cleavage has not been experimentally proven. Post-translationally, tryptophan tryptophylquinone (TTQ) is formed by oxidation of the indole ring of a tryptophan to form tryptophylquinone followed by covalent cross-linking with another tryptophan residue.

The protein resides in the periplasm. The catalysed reaction is 2 oxidized [amicyanin] + methylamine + H2O = 2 reduced [amicyanin] + formaldehyde + NH4(+) + 2 H(+). It participates in one-carbon metabolism; methylamine degradation; formaldehyde from methylamine: step 1/1. Its function is as follows. Methylamine dehydrogenase carries out the oxidation of methylamine. Electrons are passed from methylamine dehydrogenase to amicyanin. The chain is Methylamine dehydrogenase light chain (mauA) from Methylophilus methylotrophus (Bacterium W3A1).